The chain runs to 549 residues: Leucine-rich repeat, immunoglobulin-like domain and transmembrane domain-containing protein 2 (549 aa).

The first 22 residues, 1–22, serve as a signal peptide directing secretion; the sequence is MAFVFYCFLQVLVSWVIHAVQP. The region spanning 23–54 is the LRRNT domain; that stretch reads FCLPECTCSEESFGRSLQCMSMSLGKIPDNFP. 4 LRR repeats span residues 80–103, 104–125, 128–149, and 152–173; these read SLEY…EDLP, ELRE…AFRA, LLRV…ALQF, and NLIY…VFLN. The N-linked (GlcNAc...) asparagine glycan is linked to N90. Residues 200 to 252 enclose the LRRCT domain; it reads NPWLCDCRLRGLAQFVKSVGPPFILVNSYLVCQGPVSKAGQLLHETELGVCMK. Residues 253–339 enclose the Ig-like domain; the sequence is PTISTPSVNV…FNSIGRSSLV (87 aa). A glycan (N-linked (GlcNAc...) asparagine) is linked at N261. An intrachain disulfide couples C274 to C327. A Fibronectin type-III domain is found at 361–447; the sequence is EVSAYVDLRV…QPPSQGQCVV (87 aa). The helical transmembrane segment at 463-483 threads the bilayer; that stretch reads LLHVTVVLCAVLLALPVGAYV. The N-linked (GlcNAc...) asparagine glycan is linked to N491. The tract at residues 521–549 is disordered; it reads FKDPSGVYEDGESHRVMEEDEEVEKEGIS. Acidic residues predominate over residues 538 to 549; that stretch reads EEDEEVEKEGIS.

Interacts with LRIT1; may form a heterodimer with LRIT1.

It is found in the membrane. The chain is Leucine-rich repeat, immunoglobulin-like domain and transmembrane domain-containing protein 2 (Lrit2) from Mus musculus (Mouse).